A 1071-amino-acid chain; its full sequence is ATP-dependent helicase/deoxyribonuclease subunit B (1071 aa).

The protein belongs to the helicase family. AddB/RexB type 2 subfamily. In terms of assembly, heterodimer of AddA and RexB. It depends on Mg(2+) as a cofactor.

Functionally, the heterodimer acts as both an ATP-dependent DNA helicase and an ATP-dependent, dual-direction single-stranded exonuclease. Recognizes the chi site generating a DNA molecule suitable for the initiation of homologous recombination. This subunit has 5' -&gt; 3' nuclease activity but not helicase activity. In Streptococcus pyogenes serotype M18 (strain MGAS8232), this protein is ATP-dependent helicase/deoxyribonuclease subunit B.